A 437-amino-acid chain; its full sequence is Cytochrome b (437 aa).

Residues 45 to 65 (WIWGIVLAFTLVLQIVTGIVL) traverse the membrane as a helical segment. Residues histidine 97 and histidine 111 each contribute to the heme b site. 9 helical membrane-spanning segments follow: residues 100–120 (GASLFFLAVYIHIFRGLYYGS), 129–149 (WIVGMVIYLLMMGTAFMGYVL), 156–176 (FWGATVITGLFGAIPGIGPSI), 194–214 (FFSLHYLLPFVIAALVAIHIW), 248–268 (FVIKDLFALALVLLGFFAVVA), 298–318 (FLPFYAILRAFAADVWVVILV), 330–350 (FFGVIAMFGAIAVMALAPWLD), 365–385 (MWFWFLVLDFVVLTWVGAMPT), and 391–411 (WISLIASTYWFAYFLVILPLL). Residues histidine 198 and histidine 212 each contribute to the heme b site.

Belongs to the cytochrome b family. As to quaternary structure, the main subunits of complex b-c1 are: cytochrome b, cytochrome c1 and the Rieske protein. Heme b serves as cofactor.

The protein resides in the cell membrane. Component of the ubiquinol-cytochrome c reductase complex (complex III or cytochrome b-c1 complex), which is a respiratory chain that generates an electrochemical potential coupled to ATP synthesis. The protein is Cytochrome b (petB) of Rhodobacter capsulatus (strain ATCC BAA-309 / NBRC 16581 / SB1003).